The following is a 154-amino-acid chain: Ribonuclease H (154 aa).

In terms of domain architecture, RNase H type-1 spans 1-142 (MEKTVEIYTD…VDDLARDAAG (142 aa)). Asp-10, Glu-48, Asp-70, and Asp-134 together coordinate Mg(2+).

This sequence belongs to the RNase H family. Monomer. The cofactor is Mg(2+).

Its subcellular location is the cytoplasm. It carries out the reaction Endonucleolytic cleavage to 5'-phosphomonoester.. Functionally, endonuclease that specifically degrades the RNA of RNA-DNA hybrids. This Pseudoalteromonas translucida (strain TAC 125) protein is Ribonuclease H.